A 171-amino-acid polypeptide reads, in one-letter code: Co-chaperone protein HscB (171 aa).

The 73-residue stretch at 2-74 folds into the J domain; that stretch reads DYFTLFGLPA…LTRAEYLLSL (73 aa).

This sequence belongs to the HscB family. Interacts with HscA and stimulates its ATPase activity. Interacts with IscU.

Its function is as follows. Co-chaperone involved in the maturation of iron-sulfur cluster-containing proteins. Seems to help targeting proteins to be folded toward HscA. The polypeptide is Co-chaperone protein HscB (Salmonella heidelberg (strain SL476)).